Reading from the N-terminus, the 98-residue chain is NADH-ubiquinone oxidoreductase chain 4L (98 aa).

3 helical membrane-spanning segments follow: residues 1–21 (MPII…GMLI), 29–49 (SLLC…LMAL), and 58–78 (IVPI…LALL).

This sequence belongs to the complex I subunit 4L family. As to quaternary structure, core subunit of respiratory chain NADH dehydrogenase (Complex I) which is composed of 45 different subunits.

The protein localises to the mitochondrion inner membrane. The catalysed reaction is a ubiquinone + NADH + 5 H(+)(in) = a ubiquinol + NAD(+) + 4 H(+)(out). Functionally, core subunit of the mitochondrial membrane respiratory chain NADH dehydrogenase (Complex I) which catalyzes electron transfer from NADH through the respiratory chain, using ubiquinone as an electron acceptor. Part of the enzyme membrane arm which is embedded in the lipid bilayer and involved in proton translocation. The protein is NADH-ubiquinone oxidoreductase chain 4L (MT-ND4L) of Colobus guereza (Mantled guereza).